The following is a 374-amino-acid chain: Probable plastid-lipid-associated protein 3, chloroplastic (374 aa).

The N-terminal 46 residues, 1–46 (MAMPPPLFAAASHASLLLPSPTIHSSTGSRRPFRLPLRSSRRPPVA), are a transit peptide targeting the chloroplast. The segment at 19 to 148 (PSPTIHSSTG…EDNEEERREE (130 aa)) is disordered. Over residues 28-54 (GSRRPFRLPLRSSRRPPVAAAAASGVP) the composition is skewed to low complexity. Pro residues-rich tracts occupy residues 64-73 (APEPPSQPDP) and 127-136 (PAPPPPPPPV).

The protein belongs to the PAP/fibrillin family.

It is found in the plastid. The protein resides in the chloroplast. The sequence is that of Probable plastid-lipid-associated protein 3, chloroplastic (PAP3) from Oryza sativa subsp. japonica (Rice).